A 317-amino-acid polypeptide reads, in one-letter code: Ribosomal protein L11 methyltransferase (317 aa).

The S-adenosyl-L-methionine site is built by threonine 158, glycine 179, aspartate 201, and asparagine 244.

The protein belongs to the methyltransferase superfamily. PrmA family.

Its subcellular location is the cytoplasm. It carries out the reaction L-lysyl-[protein] + 3 S-adenosyl-L-methionine = N(6),N(6),N(6)-trimethyl-L-lysyl-[protein] + 3 S-adenosyl-L-homocysteine + 3 H(+). In terms of biological role, methylates ribosomal protein L11. This is Ribosomal protein L11 methyltransferase from Streptococcus pyogenes serotype M49 (strain NZ131).